A 394-amino-acid chain; its full sequence is NAD(P)H-quinone oxidoreductase subunit H (394 aa).

Belongs to the complex I 49 kDa subunit family. NDH-1 can be composed of about 15 different subunits; different subcomplexes with different compositions have been identified which probably have different functions.

The protein resides in the cellular thylakoid membrane. It catalyses the reaction a plastoquinone + NADH + (n+1) H(+)(in) = a plastoquinol + NAD(+) + n H(+)(out). The enzyme catalyses a plastoquinone + NADPH + (n+1) H(+)(in) = a plastoquinol + NADP(+) + n H(+)(out). NDH-1 shuttles electrons from an unknown electron donor, via FMN and iron-sulfur (Fe-S) centers, to quinones in the respiratory and/or the photosynthetic chain. The immediate electron acceptor for the enzyme in this species is believed to be plastoquinone. Couples the redox reaction to proton translocation, and thus conserves the redox energy in a proton gradient. Cyanobacterial NDH-1 also plays a role in inorganic carbon-concentration. The chain is NAD(P)H-quinone oxidoreductase subunit H from Thermosynechococcus vestitus (strain NIES-2133 / IAM M-273 / BP-1).